The primary structure comprises 234 residues: Orotate phosphoribosyltransferase (234 aa).

A 5-phospho-alpha-D-ribose 1-diphosphate-binding site is contributed by K37. An orotate-binding site is contributed by 45–46 (FF). Residues 83 to 84 (YK), R109, K110, K113, H115, and 134 to 142 (DDVISAGTS) contribute to the 5-phospho-alpha-D-ribose 1-diphosphate site. Orotate-binding residues include S138 and R166.

Belongs to the purine/pyrimidine phosphoribosyltransferase family. PyrE subfamily. In terms of assembly, homodimer. The cofactor is Mg(2+).

The enzyme catalyses orotidine 5'-phosphate + diphosphate = orotate + 5-phospho-alpha-D-ribose 1-diphosphate. Its pathway is pyrimidine metabolism; UMP biosynthesis via de novo pathway; UMP from orotate: step 1/2. Catalyzes the transfer of a ribosyl phosphate group from 5-phosphoribose 1-diphosphate to orotate, leading to the formation of orotidine monophosphate (OMP). The protein is Orotate phosphoribosyltransferase of Methylibium petroleiphilum (strain ATCC BAA-1232 / LMG 22953 / PM1).